Consider the following 2067-residue polypeptide: Separin (2067 aa).

Disordered regions lie at residues 51–91, 140–167, 1316–1363, and 1449–1478; these read RTAR…AQDV, KKDA…TDNE, DLEE…SVEA, and LEPK…TKAQ. Low complexity predominate over residues 55-86; the sequence is GTKATATNATASSRAKTTRTKSTSTSTTRTKT. Composition is skewed to low complexity over residues 1333–1354 and 1449–1461; these read TRQP…ARST and LEPK…SSKS. The region spanning 1880–1975 is the Peptidase C50 domain; sequence RRNGTYILNP…SGTLTEAGEY (96 aa). Cys1964 is an active-site residue.

Its subcellular location is the nucleus. The catalysed reaction is All bonds known to be hydrolyzed by this endopeptidase have arginine in P1 and an acidic residue in P4. P6 is often occupied by an acidic residue or by a hydroxy-amino-acid residue, the phosphorylation of which enhances cleavage.. In terms of biological role, required for nuclear division. Could function in the mitotic spindle. This chain is Separin (bimB), found in Emericella nidulans (strain FGSC A4 / ATCC 38163 / CBS 112.46 / NRRL 194 / M139) (Aspergillus nidulans).